A 196-amino-acid chain; its full sequence is Peptidyl-tRNA hydrolase (196 aa).

Position 18 (Tyr-18) interacts with tRNA. The active-site Proton acceptor is His-23. Positions 69, 71, and 117 each coordinate tRNA.

Belongs to the PTH family. As to quaternary structure, monomer.

It localises to the cytoplasm. It carries out the reaction an N-acyl-L-alpha-aminoacyl-tRNA + H2O = an N-acyl-L-amino acid + a tRNA + H(+). Its function is as follows. Hydrolyzes ribosome-free peptidyl-tRNAs (with 1 or more amino acids incorporated), which drop off the ribosome during protein synthesis, or as a result of ribosome stalling. Catalyzes the release of premature peptidyl moieties from peptidyl-tRNA molecules trapped in stalled 50S ribosomal subunits, and thus maintains levels of free tRNAs and 50S ribosomes. The polypeptide is Peptidyl-tRNA hydrolase (Vibrio vulnificus (strain CMCP6)).